The chain runs to 369 residues: Glutamate 5-kinase (369 aa).

K8 serves as a coordination point for ATP. The substrate site is built by S49, D136, and N148. ATP contacts are provided by residues T168–D169 and T212–K218. Residues T277–V355 form the PUA domain.

It belongs to the glutamate 5-kinase family.

It is found in the cytoplasm. It carries out the reaction L-glutamate + ATP = L-glutamyl 5-phosphate + ADP. It functions in the pathway amino-acid biosynthesis; L-proline biosynthesis; L-glutamate 5-semialdehyde from L-glutamate: step 1/2. Its function is as follows. Catalyzes the transfer of a phosphate group to glutamate to form L-glutamate 5-phosphate. This is Glutamate 5-kinase from Trichormus variabilis (strain ATCC 29413 / PCC 7937) (Anabaena variabilis).